The primary structure comprises 234 residues: Thymidine kinase, cytosolic (234 aa).

Ser13 carries the post-translational modification Phosphoserine. Residues 26–33, 58–60, and 97–100 contribute to the ATP site; these read GPMFSGKS, DTR, and DEGQ. Catalysis depends on Glu98, which acts as the Proton acceptor. Phe128 lines the substrate pocket. Zn(2+) contacts are provided by Cys153 and Cys156. Residues 172–176 and Tyr181 each bind substrate; that span reads VEVIG. Zn(2+)-binding residues include Cys185 and Cys188. Residues 203 to 205 carry the KEN box motif; that stretch reads KEN.

Belongs to the thymidine kinase family. As to quaternary structure, homotetramer. Tetramerization from dimerization is induced by ATP and increases catalytic efficiency due to a high affinity for thymidine. Tetramerization is inhibited by phosphorylation at Ser-13. Interacts (via the KEN box) with FZR1. Phosphorylated on Ser-13 in mitosis. Phosphorylation of Ser-13 by CDK1 during mitosis reduces homotetramerization and catalytic efficiency when DNA replication is complete and intracellular TK1 is still present at a high level. Post-translationally, polyubiquitinated. Postmitosis, ubiquitination leads to proteasomal degradation. The KEN box sequence located at the C-terminal region targets for degradation by the anaphase promoting complex (APC/C) activated and rate-limited by FZR1.

Its subcellular location is the cytoplasm. The enzyme catalyses thymidine + ATP = dTMP + ADP + H(+). In terms of biological role, cell-cycle-regulated enzyme of importance in nucleotide metabolism. Catalyzes the first enzymatic step in the salvage pathway converting thymidine into thymidine monophosphate. Transcriptional regulation limits expression to the S phase of the cell cycle and transient expression coincides with the oscillation in the intracellular dTTP concentration. The protein is Thymidine kinase, cytosolic (TK1) of Cricetulus griseus (Chinese hamster).